A 419-amino-acid chain; its full sequence is UDP-N-acetylglucosamine 1-carboxyvinyltransferase 2 (419 aa).

Position 22 to 23 (Lys-22 to Asn-23) interacts with phosphoenolpyruvate. Arg-92 lines the UDP-N-acetyl-alpha-D-glucosamine pocket. Cys-116 functions as the Proton donor in the catalytic mechanism. The residue at position 116 (Cys-116) is a 2-(S-cysteinyl)pyruvic acid O-phosphothioketal. UDP-N-acetyl-alpha-D-glucosamine-binding positions include Arg-121–Leu-125, Asp-306, and Val-328.

The protein belongs to the EPSP synthase family. MurA subfamily.

The protein resides in the cytoplasm. The catalysed reaction is phosphoenolpyruvate + UDP-N-acetyl-alpha-D-glucosamine = UDP-N-acetyl-3-O-(1-carboxyvinyl)-alpha-D-glucosamine + phosphate. The protein operates within cell wall biogenesis; peptidoglycan biosynthesis. In terms of biological role, cell wall formation. Adds enolpyruvyl to UDP-N-acetylglucosamine. This chain is UDP-N-acetylglucosamine 1-carboxyvinyltransferase 2, found in Carboxydothermus hydrogenoformans (strain ATCC BAA-161 / DSM 6008 / Z-2901).